Consider the following 426-residue polypeptide: Enolase (426 aa).

A (2R)-2-phosphoglycerate-binding site is contributed by Gln162. The active-site Proton donor is Glu204. Mg(2+) contacts are provided by Asp241, Glu284, and Asp311. (2R)-2-phosphoglycerate contacts are provided by Lys336, Arg365, Ser366, and Lys387. Lys336 (proton acceptor) is an active-site residue.

It belongs to the enolase family. Mg(2+) is required as a cofactor.

It is found in the cytoplasm. The protein resides in the secreted. Its subcellular location is the cell surface. It catalyses the reaction (2R)-2-phosphoglycerate = phosphoenolpyruvate + H2O. It functions in the pathway carbohydrate degradation; glycolysis; pyruvate from D-glyceraldehyde 3-phosphate: step 4/5. Its function is as follows. Catalyzes the reversible conversion of 2-phosphoglycerate (2-PG) into phosphoenolpyruvate (PEP). It is essential for the degradation of carbohydrates via glycolysis. The polypeptide is Enolase (Acidithiobacillus ferrooxidans (strain ATCC 23270 / DSM 14882 / CIP 104768 / NCIMB 8455) (Ferrobacillus ferrooxidans (strain ATCC 23270))).